The chain runs to 838 residues: Multiphosphoryl transfer protein (838 aa).

The 141-residue stretch at 7–147 (APVTPDLVRL…AVIVAALTGD (141 aa)) folds into the PTS EIIA type-2 domain. H67 (tele-phosphohistidine intermediate; for EIIA activity) is an active-site residue. Phosphohistidine; by HPr is present on H67. Residues 161-253 (AERFEWTIAY…LTAQEKADAE (93 aa)) enclose the HPr domain. Catalysis depends on H175, which acts as the Pros-phosphohistidine intermediate; for HPr activity. Residue H175 is modified to Phosphohistidine; by EI. The PTS EI stretch occupies residues 274 to 838 (AIVGIGASPG…ALEAQREGQA (565 aa)). The Tele-phosphohistidine intermediate; for PTS EI activity role is filled by H460. Position 460 is a phosphohistidine; by autocatalysis (H460). Residues R567 and R603 each coordinate phosphoenolpyruvate. Residues E697 and D721 each coordinate Mg(2+). Residues 720-721 (ND) and R731 each bind phosphoenolpyruvate. C768 functions as the Proton donor in the catalytic mechanism.

The protein belongs to the PEP-utilizing enzyme family. Mg(2+) is required as a cofactor.

The protein resides in the cytoplasm. The catalysed reaction is L-histidyl-[protein] + phosphoenolpyruvate = N(pros)-phospho-L-histidyl-[protein] + pyruvate. The phosphoenolpyruvate-dependent sugar phosphotransferase system (sugar PTS), a major carbohydrate active transport system, catalyzes the phosphorylation of incoming sugar substrates concomitantly with their translocation across the cell membrane. The enzyme II FruAB PTS system is involved in fructose transport. This Xanthomonas campestris pv. campestris (strain ATCC 33913 / DSM 3586 / NCPPB 528 / LMG 568 / P 25) protein is Multiphosphoryl transfer protein.